The chain runs to 370 residues: Phenylalanine dehydrogenase (370 aa).

Arg-44 contacts NAD(+). Lys-68 contributes to the L-phenylalanine binding site. The active-site Proton donor/acceptor is the Lys-80. L-phenylalanine is bound at residue 114 to 115 (TD). Residues Asp-115, Ser-146, Thr-150, 180-186 (GLGKVGF), 203-204 (DV), 243-244 (AI), and 264-266 (AAN) each bind NAD(+). Asn-266 provides a ligand contact to L-phenylalanine.

The protein belongs to the Glu/Leu/Phe/Val dehydrogenases family.

The enzyme catalyses L-phenylalanine + NAD(+) + H2O = 3-phenylpyruvate + NH4(+) + NADH + H(+). It participates in amino-acid biosynthesis; L-phenylalanine biosynthesis; L-phenylalanine from phenylpyruvate (PDH route): step 1/1. Catalyzes the reversible NAD(+)-dependent oxidative deamination of L-phenylalanine to phenylpyruvate. The polypeptide is Phenylalanine dehydrogenase (Caldalkalibacillus thermarum (strain TA2.A1)).